We begin with the raw amino-acid sequence, 316 residues long: Ribosomal RNA small subunit methyltransferase H (316 aa).

S-adenosyl-L-methionine contacts are provided by residues 35–37, Asp55, Phe84, Asp105, and Gln112; that span reads AGH.

Belongs to the methyltransferase superfamily. RsmH family.

It localises to the cytoplasm. It catalyses the reaction cytidine(1402) in 16S rRNA + S-adenosyl-L-methionine = N(4)-methylcytidine(1402) in 16S rRNA + S-adenosyl-L-homocysteine + H(+). Its function is as follows. Specifically methylates the N4 position of cytidine in position 1402 (C1402) of 16S rRNA. The protein is Ribosomal RNA small subunit methyltransferase H of Streptococcus pneumoniae (strain Hungary19A-6).